Consider the following 113-residue polypeptide: N-alpha-acetyltransferase 38-A, NatC auxiliary subunit (113 aa).

Positions 1–29 (MAAVLEENGCSRQSSPSAGDSDAEPGDTA) are disordered. The 79-residue stretch at 28 to 106 (TARHKLESLL…IVSIQVELES (79 aa)) folds into the Sm domain.

This sequence belongs to the snRNP Sm proteins family. As to quaternary structure, component of the N-terminal acetyltransferase C (NatC) complex, which is composed of naa35, naa38 and naa30.

The protein localises to the cytoplasm. In terms of biological role, auxillary component of the N-terminal acetyltransferase C (NatC) complex which catalyzes acetylation of N-terminal methionine residues. In Xenopus laevis (African clawed frog), this protein is N-alpha-acetyltransferase 38-A, NatC auxiliary subunit (naa38-a).